Reading from the N-terminus, the 952-residue chain is Valine--tRNA ligase (952 aa).

The short motif at 45–55 (PNVTGSLHMGH) is the 'HIGH' region element. Positions 571 to 575 (KMSKS) match the 'KMSKS' region motif. Lys-574 serves as a coordination point for ATP. The stretch at 894 to 950 (KEIAKADADIARVDLKLADQNFIANAPGEIVEDEKEKREAAAARKAKFVEALERLKA) forms a coiled coil.

The protein belongs to the class-I aminoacyl-tRNA synthetase family. ValS type 1 subfamily. In terms of assembly, monomer.

Its subcellular location is the cytoplasm. The enzyme catalyses tRNA(Val) + L-valine + ATP = L-valyl-tRNA(Val) + AMP + diphosphate. Functionally, catalyzes the attachment of valine to tRNA(Val). As ValRS can inadvertently accommodate and process structurally similar amino acids such as threonine, to avoid such errors, it has a 'posttransfer' editing activity that hydrolyzes mischarged Thr-tRNA(Val) in a tRNA-dependent manner. In Nitrobacter winogradskyi (strain ATCC 25391 / DSM 10237 / CIP 104748 / NCIMB 11846 / Nb-255), this protein is Valine--tRNA ligase.